Consider the following 235-residue polypeptide: Ubiquinone/menaquinone biosynthesis C-methyltransferase UbiE (235 aa).

S-adenosyl-L-methionine is bound by residues Thr59, Asp84, and Ser123.

Belongs to the class I-like SAM-binding methyltransferase superfamily. MenG/UbiE family.

It carries out the reaction a 2-demethylmenaquinol + S-adenosyl-L-methionine = a menaquinol + S-adenosyl-L-homocysteine + H(+). It catalyses the reaction a 2-methoxy-6-(all-trans-polyprenyl)benzene-1,4-diol + S-adenosyl-L-methionine = a 5-methoxy-2-methyl-3-(all-trans-polyprenyl)benzene-1,4-diol + S-adenosyl-L-homocysteine + H(+). The protein operates within quinol/quinone metabolism; menaquinone biosynthesis; menaquinol from 1,4-dihydroxy-2-naphthoate: step 2/2. It participates in cofactor biosynthesis; ubiquinone biosynthesis. Its function is as follows. Methyltransferase required for the conversion of demethylmenaquinol (DMKH2) to menaquinol (MKH2) and the conversion of 2-polyprenyl-6-methoxy-1,4-benzoquinol (DDMQH2) to 2-polyprenyl-3-methyl-6-methoxy-1,4-benzoquinol (DMQH2). The protein is Ubiquinone/menaquinone biosynthesis C-methyltransferase UbiE of Campylobacter jejuni subsp. jejuni serotype O:2 (strain ATCC 700819 / NCTC 11168).